The primary structure comprises 437 residues: Glutamate-1-semialdehyde 2,1-aminomutase (437 aa).

An N6-(pyridoxal phosphate)lysine modification is found at lysine 272.

Belongs to the class-III pyridoxal-phosphate-dependent aminotransferase family. HemL subfamily. As to quaternary structure, homodimer. Requires pyridoxal 5'-phosphate as cofactor.

It localises to the cytoplasm. It catalyses the reaction (S)-4-amino-5-oxopentanoate = 5-aminolevulinate. It participates in porphyrin-containing compound metabolism; protoporphyrin-IX biosynthesis; 5-aminolevulinate from L-glutamyl-tRNA(Glu): step 2/2. This Moorella thermoacetica (strain ATCC 39073 / JCM 9320) protein is Glutamate-1-semialdehyde 2,1-aminomutase.